A 466-amino-acid polypeptide reads, in one-letter code: Asparagine--tRNA ligase (466 aa).

Belongs to the class-II aminoacyl-tRNA synthetase family. As to quaternary structure, homodimer.

The protein localises to the cytoplasm. It carries out the reaction tRNA(Asn) + L-asparagine + ATP = L-asparaginyl-tRNA(Asn) + AMP + diphosphate + H(+). The sequence is that of Asparagine--tRNA ligase from Photorhabdus laumondii subsp. laumondii (strain DSM 15139 / CIP 105565 / TT01) (Photorhabdus luminescens subsp. laumondii).